A 494-amino-acid chain; its full sequence is MGSTSSLYAAIDLGSNSFHMLVVREVAGSIQTLTRIKRKVRLAAGLNSENALSNEAMERGWQCLRLFAERLQDIPPSQIRVVATATLRLAVNAGDFIAKAQEILGCPVQVISGEEEARLIYQGVAHTTGGADQRLVVDIGGASTELVTGTGAQTTSLFSLSMGCVTWLERYFADRNLGQENFDAAEKAAREVLRPVADELRYHGWKVCVGASGTVQALQEIMMAQGMDERITLEKLQQLKQRAIHCGRLEELEIDGLTLERALVFPSGLAILIAIFTELNIQCMTLAGGALREGLVYGMLHLTVEQDIRSRTLRNIQRRFMIDIDQAQRVAKVAANFYDQVENEWHLEAISRDLLISACQLHEIGLSVDFKQAPQHAAYLVRNLDLPGFTPAQKKLLATLLLNQTNPVDLSSLHQQNAVPPRVAEQLCRLLRLAIIFASRRRDDLVPEMTLQANHELLTLTLPQGWLTQHPLGKEIIDQESQWQSYVHWPLEVH.

This sequence belongs to the GppA/Ppx family. GppA subfamily.

It carries out the reaction guanosine 3'-diphosphate 5'-triphosphate + H2O = guanosine 3',5'-bis(diphosphate) + phosphate + H(+). The protein operates within purine metabolism; ppGpp biosynthesis; ppGpp from GTP: step 2/2. Catalyzes the conversion of pppGpp to ppGpp. Guanosine pentaphosphate (pppGpp) is a cytoplasmic signaling molecule which together with ppGpp controls the 'stringent response', an adaptive process that allows bacteria to respond to amino acid starvation, resulting in the coordinated regulation of numerous cellular activities. The protein is Guanosine-5'-triphosphate,3'-diphosphate pyrophosphatase of Escherichia coli O6:H1 (strain CFT073 / ATCC 700928 / UPEC).